The primary structure comprises 520 residues: Cytochrome P450 4F8 (520 aa).

Residues 15–37 (AASPWLLLLVVGASWLLARILAW) form a helical membrane-spanning segment. Cys468 contributes to the heme binding site.

The protein belongs to the cytochrome P450 family. Requires heme as cofactor. As to expression, expressed in the epithelium of seminal vesicles, in renal cortex, in adult and fetal liver, in epidermis, in corneal epithelium, in sweat glands, hair follicles, epithelial linings of the ampulla of vas deferens and of the stomach and small intestine, as well as in the transitional epithelium of the bladder and ureter (at protein level). In the epidermis, expressed from the basal cell to the granular cell layers. In the corneal epithelium, expressed in all cell layers. Also detected in prostate. Up-regulated in the epidermis of psoriatic lesions.

The protein resides in the endoplasmic reticulum membrane. Its subcellular location is the microsome membrane. It carries out the reaction an organic molecule + reduced [NADPH--hemoprotein reductase] + O2 = an alcohol + oxidized [NADPH--hemoprotein reductase] + H2O + H(+). The catalysed reaction is (5Z,8Z,11Z,14Z)-eicosatetraenoate + reduced [NADPH--hemoprotein reductase] + O2 = (18R)-hydroxy-(5Z,8Z,11Z,14Z)-eicosatetraenoate + oxidized [NADPH--hemoprotein reductase] + H2O + H(+). The enzyme catalyses (4Z,7Z,10Z,13Z,16Z)-docosapentaenoate + reduced [NADPH--hemoprotein reductase] + O2 = 20-hydroxy-(4Z,7Z,10Z,13Z,16Z)-docosapentaenoate + oxidized [NADPH--hemoprotein reductase] + H2O + H(+). It catalyses the reaction prostaglandin H1 + reduced [NADPH--hemoprotein reductase] + O2 = 19-hydroxyprostaglandin H1 + oxidized [NADPH--hemoprotein reductase] + H2O + H(+). It carries out the reaction prostaglandin H2 + reduced [NADPH--hemoprotein reductase] + O2 = 19-hydroxyprostaglandin H2 + oxidized [NADPH--hemoprotein reductase] + H2O + H(+). The catalysed reaction is prostaglandin I2 + reduced [NADPH--hemoprotein reductase] + O2 = 19-hydroxy-prostaglandin I2 + oxidized [NADPH--hemoprotein reductase] + H2O + H(+). The enzyme catalyses (4Z,7Z,10Z,13Z,16Z,19Z)-docosahexaenoate + reduced [NADPH--hemoprotein reductase] + O2 = 10,11-epoxy-(4Z,7Z,13Z,16Z,19Z)-docosapentaenoate + oxidized [NADPH--hemoprotein reductase] + H2O + H(+). It catalyses the reaction (4Z,7Z,10Z,13Z,16Z,19Z)-docosahexaenoate + reduced [NADPH--hemoprotein reductase] + O2 = 13,14-epoxy-(4Z,7Z,10Z,16Z,19Z)-docosapentaenoate + oxidized [NADPH--hemoprotein reductase] + H2O + H(+). It carries out the reaction (4Z,7Z,10Z,13Z,16Z,19Z)-docosahexaenoate + reduced [NADPH--hemoprotein reductase] + O2 = 16,17-epoxy-(4Z,7Z,10Z,13Z,19Z)-docosapentaenoate + oxidized [NADPH--hemoprotein reductase] + H2O + H(+). The catalysed reaction is (4Z,7Z,10Z,13Z,16Z,19Z)-docosahexaenoate + reduced [NADPH--hemoprotein reductase] + O2 = 19,20-epoxy-(4Z,7Z,10Z,13Z,16Z)-docosapentaenoate + oxidized [NADPH--hemoprotein reductase] + H2O + H(+). The enzyme catalyses (7Z,10Z,13Z,16Z,19Z)-docosapentaenoate + reduced [NADPH--hemoprotein reductase] + O2 = 10,11-epoxy-(7Z,13Z,16Z,19Z)-docosatetraenoate + oxidized [NADPH--hemoprotein reductase] + H2O + H(+). It catalyses the reaction (7Z,10Z,13Z,16Z,19Z)-docosapentaenoate + reduced [NADPH--hemoprotein reductase] + O2 = 13,14-epoxy-(7Z,10Z,16Z,19Z)-docosatetraenoate + oxidized [NADPH--hemoprotein reductase] + H2O + H(+). It carries out the reaction (7Z,10Z,13Z,16Z,19Z)-docosapentaenoate + reduced [NADPH--hemoprotein reductase] + O2 = 16,17-epoxy-(7Z,10Z,13Z,19Z)-docosatetraenoate + oxidized [NADPH--hemoprotein reductase] + H2O + H(+). The catalysed reaction is (7Z,10Z,13Z,16Z,19Z)-docosapentaenoate + reduced [NADPH--hemoprotein reductase] + O2 = 19,20-epoxy-(7Z,10Z,13Z,16Z)-docosatetraenoate + oxidized [NADPH--hemoprotein reductase] + H2O + H(+). The protein operates within lipid metabolism; fatty acid metabolism. A cytochrome P450 monooxygenase involved in the metabolism of endogenous polyunsaturated fatty acids (PUFAs) and their oxygenated derivatives (oxylipins). Mechanistically, uses molecular oxygen inserting one oxygen atom into a substrate, and reducing the second into a water molecule, with two electrons provided by NADPH via cytochrome P450 reductase (CPR; NADPH-ferrihemoprotein reductase). Catalyzes the hydroxylation of carbon hydrogen bonds, with preference for omega-1 and omega-2 positions. Hydroxylates (5Z,8Z,11Z,14Z)-eicosatetraenoic acid (arachidonate) predominantly at omega-2 position to form (18R)-hydroxyeicosatetraenoic acid (18R-HETE). Exhibits omega-1 hydroxylase activity toward prostaglandin (PG) H1, PGH2 and PGI2. Catalyzes the epoxidation of double bonds of PUFAs, including docosahexaenoic and docosapentaenoic acids. Shows little activity against PGD2, PGE1, PGE2, PGF2alpha, and leukotriene B4. The polypeptide is Cytochrome P450 4F8 (Homo sapiens (Human)).